Consider the following 87-residue polypeptide: UPF0213 protein SYNAS_10430 (87 aa).

The 77-residue stretch at 2-78 (SKNYVYILEC…KKMSRAEKLQ (77 aa)) folds into the GIY-YIG domain.

The protein belongs to the UPF0213 family.

This chain is UPF0213 protein SYNAS_10430, found in Syntrophus aciditrophicus (strain SB).